Consider the following 518-residue polypeptide: Protein nucleotidyltransferase YdiU (518 aa).

ATP is bound by residues Gly-99, Gly-101, Arg-102, Lys-122, Asp-134, Gly-135, Arg-192, and Arg-199. Asp-270 acts as the Proton acceptor in catalysis. Residues Asn-271 and Asp-280 each contribute to the Mg(2+) site. Position 280 (Asp-280) interacts with ATP.

Belongs to the SELO family. Mg(2+) serves as cofactor. Requires Mn(2+) as cofactor.

The enzyme catalyses L-seryl-[protein] + ATP = 3-O-(5'-adenylyl)-L-seryl-[protein] + diphosphate. The catalysed reaction is L-threonyl-[protein] + ATP = 3-O-(5'-adenylyl)-L-threonyl-[protein] + diphosphate. It carries out the reaction L-tyrosyl-[protein] + ATP = O-(5'-adenylyl)-L-tyrosyl-[protein] + diphosphate. It catalyses the reaction L-histidyl-[protein] + UTP = N(tele)-(5'-uridylyl)-L-histidyl-[protein] + diphosphate. The enzyme catalyses L-seryl-[protein] + UTP = O-(5'-uridylyl)-L-seryl-[protein] + diphosphate. The catalysed reaction is L-tyrosyl-[protein] + UTP = O-(5'-uridylyl)-L-tyrosyl-[protein] + diphosphate. Its function is as follows. Nucleotidyltransferase involved in the post-translational modification of proteins. It can catalyze the addition of adenosine monophosphate (AMP) or uridine monophosphate (UMP) to a protein, resulting in modifications known as AMPylation and UMPylation. This is Protein nucleotidyltransferase YdiU from Methylobacillus flagellatus (strain ATCC 51484 / DSM 6875 / VKM B-1610 / KT).